We begin with the raw amino-acid sequence, 204 residues long: Dephospho-CoA kinase (204 aa).

Residues 5–204 (VVGLTGGIGS…YLANLVKAML (200 aa)) form the DPCK domain. 13-18 (GSGKSA) contributes to the ATP binding site.

This sequence belongs to the CoaE family.

The protein localises to the cytoplasm. It catalyses the reaction 3'-dephospho-CoA + ATP = ADP + CoA + H(+). It participates in cofactor biosynthesis; coenzyme A biosynthesis; CoA from (R)-pantothenate: step 5/5. Its function is as follows. Catalyzes the phosphorylation of the 3'-hydroxyl group of dephosphocoenzyme A to form coenzyme A. The polypeptide is Dephospho-CoA kinase (Chromobacterium violaceum (strain ATCC 12472 / DSM 30191 / JCM 1249 / CCUG 213 / NBRC 12614 / NCIMB 9131 / NCTC 9757 / MK)).